The chain runs to 718 residues: Protein spire homolog 2 (718 aa).

Disordered regions lie at residues 1–22 and 143–166; these read MARAGGGGAAAPERAGGAARPE and DSSCGAADEGYVGPEEEEEAEGGP. The span at 10-21 shows a compositional bias: low complexity; the sequence is AAPERAGGAARP. The 182-residue stretch at 26-207 folds into the KIND domain; it reads LSLEEVLKVY…RALFVETLEL (182 aa). WH2 domains lie at 251 to 265, 281 to 299, and 345 to 362; these read QLMRELRHGVKLKKV, PFEMLMQDIRARNYKLRKV, and LHEKILEEIKQERRLRPV. Ser374 carries the post-translational modification Phosphoserine. The disordered stretch occupies residues 397-434; it reads TDTGSGSQRPRPRVLLKAPTLAEMEEMNTSEEEESPCG. Over residues 419–432 the composition is skewed to acidic residues; it reads EMEEMNTSEEEESP. Residues Ser443, Ser445, and Ser479 each carry the phosphoserine modification. The segment at 456–518 is disordered; sequence MASGLQSAAQ…SSLSSVDGPE (63 aa). Positions 496 to 513 are enriched in low complexity; the sequence is SGQSQPLPSSALPSSLSS. The tract at residues 538-558 is spir-box; it reads LALTVEEVVDVRRVLVKAEME.

The protein belongs to the spire family. As to expression, detected in oocytes.

Its subcellular location is the cytoplasm. It localises to the cytoskeleton. It is found in the cytosol. The protein localises to the cell membrane. The protein resides in the cytoplasmic vesicle membrane. In terms of biological role, acts as an actin nucleation factor, remains associated with the slow-growing pointed end of the new filament. Involved in intracellular vesicle transport along actin fibers, providing a novel link between actin cytoskeleton dynamics and intracellular transport. Required for asymmetric spindle positioning and asymmetric cell division during oocyte meiosis. Required for normal formation of the cleavage furrow and for polar body extrusion during female germ cell meiosis. Also acts in the nucleus: together with SPIRE1 and SPIRE2, promotes assembly of nuclear actin filaments in response to DNA damage in order to facilitate movement of chromatin and repair factors after DNA damage. This Mus musculus (Mouse) protein is Protein spire homolog 2 (Spire2).